Reading from the N-terminus, the 343-residue chain is Fructose-1,6-bisphosphatase class 1 (343 aa).

Residues Glu99, Asp121, Leu123, and Asp124 each coordinate Mg(2+). Residues 124–127, Asn218, Tyr250, and Lys283 each bind substrate; that span reads DGSS. A Mg(2+)-binding site is contributed by Glu289.

This sequence belongs to the FBPase class 1 family. As to quaternary structure, homotetramer. Mg(2+) is required as a cofactor.

It is found in the cytoplasm. It catalyses the reaction beta-D-fructose 1,6-bisphosphate + H2O = beta-D-fructose 6-phosphate + phosphate. It participates in carbohydrate biosynthesis; gluconeogenesis. The chain is Fructose-1,6-bisphosphatase class 1 from Leptospira biflexa serovar Patoc (strain Patoc 1 / Ames).